Reading from the N-terminus, the 143-residue chain is Small ribosomal subunit protein uS9 (143 aa).

Ser-2 is modified (N-acetylserine). The disordered stretch occupies residues 123-143 (MPEPKKFGGKGARSRYQKSYR). A compositionally biased stretch (basic residues) spans 134–143 (ARSRYQKSYR).

This sequence belongs to the universal ribosomal protein uS9 family.

The polypeptide is Small ribosomal subunit protein uS9 (RPS16) (Maudiozyma exigua (Yeast)).